We begin with the raw amino-acid sequence, 1141 residues long: Myosin-binding protein C, fast-type (1141 aa).

The tract at residues 1–62 (MPEAKPAAKK…VFLKKPDSVS (62 aa)) is disordered. Over residues 13-39 (KGKDAPKGAPKEAPPKEAPAEAPKEAP) the composition is skewed to basic and acidic residues. 5 Ig-like C2-type domains span residues 50–153 (PTGV…NIDV), 255–344 (SAAF…VKEP), 345–437 (PVLI…VEEK), 438–538 (QLEV…KQEP), and 539–638 (PKIH…VVDV). Fibronectin type-III domains are found at residues 641-737 (PPEA…IAPT) and 739-834 (EPLH…IREI). In terms of domain architecture, Ig-like C2-type 6 spans 838-932 (PKIRLPRHLR…ATIRIRVVEK (95 aa)). Residues 935 to 1030 (PPINVMVKEV…SKNTARILKT (96 aa)) form the Fibronectin type-III 3 domain. The Ig-like C2-type 7 domain maps to 1048 to 1141 (PKFLTPLIDR…ECKLEVRVPQ (94 aa)).

Belongs to the immunoglobulin superfamily. MyBP family.

Functionally, thick filament-associated protein located in the crossbridge region of vertebrate striated muscle a bands. In vitro it binds MHC, F-actin and native thin filaments, and modifies the activity of actin-activated myosin ATPase. It may modulate muscle contraction or may play a more structural role. This chain is Myosin-binding protein C, fast-type (MYBPC2), found in Homo sapiens (Human).